Consider the following 158-residue polypeptide: Large ribosomal subunit protein uL15 (158 aa).

The protein belongs to the universal ribosomal protein uL15 family. Part of the 50S ribosomal subunit.

Its function is as follows. Binds to the 23S rRNA. In Aeropyrum pernix (strain ATCC 700893 / DSM 11879 / JCM 9820 / NBRC 100138 / K1), this protein is Large ribosomal subunit protein uL15.